Here is a 766-residue protein sequence, read N- to C-terminus: Dolichyl pyrophosphate Glc1Man9GlcNAc2 alpha-1,3-glucosyltransferase (766 aa).

The next 12 helical transmembrane spans lie at 6–26 (LVLAVTAILISFKCLLIPAYV), 60–80 (YPPFFAYFELGLASVAHFFGF), 96–116 (ILIFQRFSVIFCDILYIAVCA), 156–176 (SIHFQYNSMLTAIFLMSLFFI), 190–210 (ILLNFKHIYVYYALGYVFYYL), 228–248 (AISLAIALLIPFCASIFPFIH), 324–344 (PMGTLCLVVISSMIVLTGLVI), 350–370 (ADFSLFAVFSAFCFFYFGYHV), 395–415 (ILIHLTCIASFSLFPLLFTPF), 423–443 (ICVSYFFIQLVFLKRVTLMPL), 452–472 (VASWLLMGMVEVYNTFLHKWL), and 482–502 (LMAISILTAIELTGLIGALIW).

It belongs to the ALG6/ALG8 glucosyltransferase family.

The protein resides in the endoplasmic reticulum membrane. The enzyme catalyses an alpha-D-Glc-(1-&gt;3)-alpha-D-Man-(1-&gt;2)-alpha-D-Man-(1-&gt;2)-alpha-D-Man-(1-&gt;3)-[alpha-D-Man-(1-&gt;2)-alpha-D-Man-(1-&gt;3)-[alpha-D-Man-(1-&gt;2)-alpha-D-Man-(1-&gt;6)]-alpha-D-Man-(1-&gt;6)]-beta-D-Man-(1-&gt;4)-beta-D-GlcNAc-(1-&gt;4)-alpha-D-GlcNAc-diphospho-di-trans,poly-cis-dolichol + a di-trans,poly-cis-dolichyl beta-D-glucosyl phosphate = an alpha-D-Glc-(1-&gt;3)-alpha-D-Glc-(1-&gt;3)-alpha-D-Man-(1-&gt;2)-alpha-D-Man-(1-&gt;2)-alpha-D-Man-(1-&gt;3)-[alpha-D-Man-(1-&gt;2)-alpha-D-Man-(1-&gt;3)-[alpha-D-Man-(1-&gt;2)-alpha-D-Man-(1-&gt;6)]-alpha-D-Man-(1-&gt;6)]-beta-D-Man-(1-&gt;4)-beta-D-GlcNAc-(1-&gt;4)-alpha-D-GlcNAc-diphospho-di-trans,poly-cis-dolichol + a di-trans,poly-cis-dolichyl phosphate + H(+). It participates in protein modification; protein glycosylation. Dolichyl pyrophosphate Glc1Man9GlcNAc2 alpha-1,3-glucosyltransferase that operates in the biosynthetic pathway of dolichol-linked oligosaccharides, the glycan precursors employed in protein asparagine (N)-glycosylation. The assembly of dolichol-linked oligosaccharides begins on the cytosolic side of the endoplasmic reticulum membrane and finishes in its lumen. The sequential addition of sugars to dolichol pyrophosphate produces dolichol-linked oligosaccharides containing fourteen sugars, including two GlcNAcs, nine mannoses and three glucoses. Once assembled, the oligosaccharide is transferred from the lipid to nascent proteins by oligosaccharyltransferases. In the lumen of the endoplasmic reticulum, adds the second glucose residue from dolichyl phosphate glucose (Dol-P-Glc) onto the lipid-linked oligosaccharide intermediate Glc(1)Man(9)GlcNAc(2)-PP-Dol to produce Glc(2)Man(9)GlcNAc(2)-PP-Dol. This chain is Dolichyl pyrophosphate Glc1Man9GlcNAc2 alpha-1,3-glucosyltransferase, found in Caenorhabditis elegans.